A 150-amino-acid chain; its full sequence is uncharacterized protein (150 aa).

Residues 75-150 are disordered; that stretch reads RAPQNPPPPG…LLDAVAAAET (76 aa). Residues 86-103 show a composition bias toward low complexity; the sequence is QRNLPLRRLPALPAAPEA.

This is an uncharacterized protein from Homo sapiens (Human).